We begin with the raw amino-acid sequence, 215 residues long: NADH-quinone oxidoreductase subunit C (215 aa).

This sequence belongs to the complex I 30 kDa subunit family. As to quaternary structure, NDH-1 is composed of 14 different subunits. Subunits NuoB, C, D, E, F, and G constitute the peripheral sector of the complex.

Its subcellular location is the cell inner membrane. The catalysed reaction is a quinone + NADH + 5 H(+)(in) = a quinol + NAD(+) + 4 H(+)(out). Functionally, NDH-1 shuttles electrons from NADH, via FMN and iron-sulfur (Fe-S) centers, to quinones in the respiratory chain. The immediate electron acceptor for the enzyme in this species is believed to be ubiquinone. Couples the redox reaction to proton translocation (for every two electrons transferred, four hydrogen ions are translocated across the cytoplasmic membrane), and thus conserves the redox energy in a proton gradient. This Methylobacterium sp. (strain 4-46) protein is NADH-quinone oxidoreductase subunit C.